Here is a 150-residue protein sequence, read N- to C-terminus: Large ribosomal subunit protein bL9 (150 aa).

This sequence belongs to the bacterial ribosomal protein bL9 family.

In terms of biological role, binds to the 23S rRNA. This is Large ribosomal subunit protein bL9 from Halorhodospira halophila (strain DSM 244 / SL1) (Ectothiorhodospira halophila (strain DSM 244 / SL1)).